A 250-amino-acid chain; its full sequence is Hydroxyethylthiazole kinase (250 aa).

Residue Met-39 coordinates substrate. ATP is bound by residues Arg-114 and Thr-159. Gly-186 serves as a coordination point for substrate.

This sequence belongs to the Thz kinase family. Requires Mg(2+) as cofactor.

The enzyme catalyses 5-(2-hydroxyethyl)-4-methylthiazole + ATP = 4-methyl-5-(2-phosphooxyethyl)-thiazole + ADP + H(+). Its pathway is cofactor biosynthesis; thiamine diphosphate biosynthesis; 4-methyl-5-(2-phosphoethyl)-thiazole from 5-(2-hydroxyethyl)-4-methylthiazole: step 1/1. In terms of biological role, catalyzes the phosphorylation of the hydroxyl group of 4-methyl-5-beta-hydroxyethylthiazole (THZ). This Lactococcus lactis subsp. cremoris (strain MG1363) protein is Hydroxyethylthiazole kinase.